A 460-amino-acid polypeptide reads, in one-letter code: A-type ATP synthase subunit B (460 aa).

This sequence belongs to the ATPase alpha/beta chains family. As to quaternary structure, has multiple subunits with at least A(3), B(3), C, D, E, F, H, I and proteolipid K(x).

Its subcellular location is the cell membrane. In terms of biological role, component of the A-type ATP synthase that produces ATP from ADP in the presence of a proton gradient across the membrane. The B chain is a regulatory subunit. This Thermofilum pendens (strain DSM 2475 / Hrk 5) protein is A-type ATP synthase subunit B.